A 104-amino-acid polypeptide reads, in one-letter code: Cell division protein FtsB (104 aa).

At 1-3 (MGK) the chain is on the cytoplasmic side. A helical transmembrane segment spans residues 4-21 (LTLLLLVLLGWLQYSLWL). Over 22-104 (GKNGIHDYTR…NAQQGRPASQ (83 aa)) the chain is Periplasmic. Positions 33-62 (DEDVASQQGNNAKLKARNDRLFAEIDDLNG) form a coiled coil.

Belongs to the FtsB family. In terms of assembly, part of a complex composed of FtsB, FtsL and FtsQ.

The protein localises to the cell inner membrane. Its function is as follows. Essential cell division protein. May link together the upstream cell division proteins, which are predominantly cytoplasmic, with the downstream cell division proteins, which are predominantly periplasmic. This is Cell division protein FtsB from Erwinia tasmaniensis (strain DSM 17950 / CFBP 7177 / CIP 109463 / NCPPB 4357 / Et1/99).